An 836-amino-acid polypeptide reads, in one-letter code: DNA gyrase subunit A (836 aa).

The Topo IIA-type catalytic domain maps to 34–500 (LPDARDGLKP…AGDVRDIEDI (467 aa)). Tyr-122 acts as the O-(5'-phospho-DNA)-tyrosine intermediate in catalysis. Residues 527 to 533 (QKRGGQG) carry the GyrA-box motif.

It belongs to the type II topoisomerase GyrA/ParC subunit family. As to quaternary structure, heterotetramer, composed of two GyrA and two GyrB chains. In the heterotetramer, GyrA contains the active site tyrosine that forms a transient covalent intermediate with DNA, while GyrB binds cofactors and catalyzes ATP hydrolysis.

It is found in the cytoplasm. The enzyme catalyses ATP-dependent breakage, passage and rejoining of double-stranded DNA.. Its function is as follows. A type II topoisomerase that negatively supercoils closed circular double-stranded (ds) DNA in an ATP-dependent manner to modulate DNA topology and maintain chromosomes in an underwound state. Negative supercoiling favors strand separation, and DNA replication, transcription, recombination and repair, all of which involve strand separation. Also able to catalyze the interconversion of other topological isomers of dsDNA rings, including catenanes and knotted rings. Type II topoisomerases break and join 2 DNA strands simultaneously in an ATP-dependent manner. The protein is DNA gyrase subunit A of Chlamydia trachomatis serovar D (strain ATCC VR-885 / DSM 19411 / UW-3/Cx).